The primary structure comprises 92 residues: RNA-binding protein Hfq (92 aa).

The Sm domain occupies 9 to 68; the sequence is DPFLNALRRERVPVSIYLVNGIKLQGQVESFDQFVILLKNTVSQMVYKHAISTVVPARPF. Residues 68-92 form a disordered region; it reads FNVSSHHNTPNQAAGYNASHDDSAE. Over residues 69–81 the composition is skewed to polar residues; the sequence is NVSSHHNTPNQAA.

It belongs to the Hfq family. Homohexamer.

In terms of biological role, RNA chaperone that binds small regulatory RNA (sRNAs) and mRNAs to facilitate mRNA translational regulation in response to envelope stress, environmental stress and changes in metabolite concentrations. Also binds with high specificity to tRNAs. In Shewanella loihica (strain ATCC BAA-1088 / PV-4), this protein is RNA-binding protein Hfq.